The following is a 52-amino-acid chain: Rubredoxin (52 aa).

In terms of domain architecture, Rubredoxin-like spans 1-51 (MDKYECSICGYIYDEAEGDDGNVAAGTKFADLPADWVCPTCGADKDAFVKM). Residues Cys-6, Cys-9, Cys-38, and Cys-41 each contribute to the Fe cation site.

It belongs to the rubredoxin family. It depends on Fe(3+) as a cofactor.

Rubredoxin is a small nonheme, iron protein lacking acid-labile sulfide. Its single Fe, chelated to 4 Cys, functions as an electron acceptor and may also stabilize the conformation of the molecule. The protein is Rubredoxin of Megasphaera elsdenii.